Reading from the N-terminus, the 95-residue chain is Large ribosomal subunit protein uL23 (95 aa).

Belongs to the universal ribosomal protein uL23 family. Part of the 50S ribosomal subunit. Contacts protein L29, and trigger factor when it is bound to the ribosome.

Functionally, one of the early assembly proteins it binds 23S rRNA. One of the proteins that surrounds the polypeptide exit tunnel on the outside of the ribosome. Forms the main docking site for trigger factor binding to the ribosome. The sequence is that of Large ribosomal subunit protein uL23 from Coxiella burnetii (strain CbuK_Q154) (Coxiella burnetii (strain Q154)).